A 156-amino-acid chain; its full sequence is Putative pre-16S rRNA nuclease (156 aa).

This sequence belongs to the YqgF nuclease family.

The protein resides in the cytoplasm. In terms of biological role, could be a nuclease involved in processing of the 5'-end of pre-16S rRNA. This Ehrlichia canis (strain Jake) protein is Putative pre-16S rRNA nuclease.